The primary structure comprises 342 residues: Manganese-dependent ADP-ribose/CDP-alcohol diphosphatase (342 aa).

Zn(2+) contacts are provided by Asp-18, Gln-20, Asp-67, Asn-103, His-239, His-276, and His-278.

It belongs to the ADPRibase-Mn family. As to quaternary structure, monomer. Mg(2+) serves as cofactor.

It carries out the reaction CDP-choline + H2O = phosphocholine + CMP + 2 H(+). The catalysed reaction is ADP-D-ribose + H2O = D-ribose 5-phosphate + AMP + 2 H(+). It catalyses the reaction CDP-glycerol + H2O = sn-glycerol 3-phosphate + CMP + 2 H(+). Functionally, hydrolyzes ADP-ribose, IDP-ribose, CDP-glycerol, CDP-choline and CDP-ethanolamine, but not other non-reducing ADP-sugars or CDP-glucose. In Xenopus tropicalis (Western clawed frog), this protein is Manganese-dependent ADP-ribose/CDP-alcohol diphosphatase (adprm).